Here is a 685-residue protein sequence, read N- to C-terminus: Bifunctional diguanylate cyclase/cyclic di-GMP phosphodiesterase MucR (685 aa).

Residues 6-199 enclose the MHYT domain; the sequence is YNQVLVAFSL…YTGMAAAQFP (194 aa). The next 7 membrane-spanning stretches (helical) occupy residues 9–29, 44–64, 77–97, 117–137, 141–161, 175–195, and 214–234; these read VLVA…LDMA, LIGG…VGML, GLTL…LWLV, GIAA…GIVY, WLGL…WIAF, AGAA…GMAA, and GWLA…ALIV. Over 235 to 685 the chain is Cytoplasmic; that stretch reads SVLDSRLEAR…PAEQLLASVA (451 aa). Residues 293 to 425 form the GGDEF domain; the sequence is RRFAVLFMDL…GRNGYCFFES (133 aa). Positions 434 to 685 constitute an EAL domain; sequence QLQLLHDLRQ…PAEQLLASVA (252 aa). Residues Gln-455, Glu-469, Leu-472, Arg-473, Asn-528, and Gln-533 each contribute to the 3',3'-c-di-GMP site. Glu-469 is a binding site for Mg(2+). Asn-528 serves as a coordination point for Mg(2+). Mg(2+)-binding residues include Glu-560, Asp-590, and Asp-591. Asp-590 is a 3',3'-c-di-GMP binding site. Arg-614 is a 3',3'-c-di-GMP binding site. Residue Glu-647 coordinates Mg(2+). 3',3'-c-di-GMP is bound by residues Glu-650 and Phe-669.

As to quaternary structure, homodimer. Requires Mg(2+) as cofactor.

The protein localises to the cell inner membrane. The catalysed reaction is 2 GTP = 3',3'-c-di-GMP + 2 diphosphate. It carries out the reaction 3',3'-c-di-GMP + H2O = 5'-phosphoguanylyl(3'-&gt;5')guanosine + H(+). Displays both diguanylate cyclase (DGC) and c-di-GMP-specific phosphodiesterase (PDE) activity. Probably modulates DGC and PDE activities, and thus c-di-GMP levels, in a growth mode-dependent manner. May act as a PDE under planktonic growth conditions and as a DGC in biofilms. During biofilm formation, it specifically activates alginate biosynthesis via generation of a localized c-di-GMP pool in the vicinity of the alginate biosynthesis protein Alg44. The protein is Bifunctional diguanylate cyclase/cyclic di-GMP phosphodiesterase MucR of Pseudomonas aeruginosa (strain ATCC 15692 / DSM 22644 / CIP 104116 / JCM 14847 / LMG 12228 / 1C / PRS 101 / PAO1).